We begin with the raw amino-acid sequence, 869 residues long: Leucine--tRNA ligase (869 aa).

The 'HIGH' region motif lies at Pro42 to His52. The 'KMSKS' region motif lies at Thr624–Ser628. ATP is bound at residue Lys627.

It belongs to the class-I aminoacyl-tRNA synthetase family.

It is found in the cytoplasm. It carries out the reaction tRNA(Leu) + L-leucine + ATP = L-leucyl-tRNA(Leu) + AMP + diphosphate. The chain is Leucine--tRNA ligase from Nitrosomonas europaea (strain ATCC 19718 / CIP 103999 / KCTC 2705 / NBRC 14298).